A 662-amino-acid chain; its full sequence is MINRITDNKFELISKYEPSGDQPQAIEQLVDNIEGGEKAQILMGATGTGKTYTMSQVIAQVNKPTLVIAHNKTLAGQLYGEFKEFFPNNAVEYFVSYYDYYQPEAYVPSSDTYIEKDSSVNDEIDKLRHSATSALLERNDVIVVASVSCIYGLGSPKEYSDSVVSLRPGLEISRDKLLNDLVDIQFERNDIDFQRGKFRVRGDVVEIFPASRDEHAFRVEFFGDEIDRIREVEALTGRVLGEVDHLAIFPATHFVTNEDHMEVAIAKIQAELEEQLAKFEKEGKLLEAQRLKQRTEYDIEMLREMGYTNGVENYSRHMDGRSEGEPPYTLLDFFPDDFLIMIDESHMTMGQIRGMYNGDRSRKEMLVNYGFRLPSALDNRPLRREEFESHVHQIVYVSATPGDYENEQTDTVIEQIIRPTGLLDPEVEVRPTMGQIDDLLGEINARVEKNERTFITTLTKKMAEDLTDYFKEMGVKVKYMHSDIKTLERTEIIRDLRLGVFDVLVGINLLREGIDVPEVSLVAILDADKEGFLRNERGLIQTIGRAARNSEGHVIMYADTMTQSMQRAIDETARRRAIQMAYNEEHGIVPQTIKKEIRDLISVTKTALPDKEETVEIESLNKQERKDMIKKLEGQMQEAAGLLDFELAAQIRDMILEIKAMD.

Residues 31–188 form the Helicase ATP-binding domain; that stretch reads DNIEGGEKAQ…NDLVDIQFER (158 aa). 44–51 contacts ATP; sequence GATGTGKT. A Beta-hairpin motif is present at residues 97–120; that stretch reads YYDYYQPEAYVPSSDTYIEKDSSV. Residues 435–601 enclose the Helicase C-terminal domain; sequence QIDDLLGEIN…TIKKEIRDLI (167 aa). The UVR domain maps to 626-661; that stretch reads KDMIKKLEGQMQEAAGLLDFELAAQIRDMILEIKAM.

It belongs to the UvrB family. As to quaternary structure, forms a heterotetramer with UvrA during the search for lesions. Interacts with UvrC in an incision complex.

It localises to the cytoplasm. The UvrABC repair system catalyzes the recognition and processing of DNA lesions. A damage recognition complex composed of 2 UvrA and 2 UvrB subunits scans DNA for abnormalities. Upon binding of the UvrA(2)B(2) complex to a putative damaged site, the DNA wraps around one UvrB monomer. DNA wrap is dependent on ATP binding by UvrB and probably causes local melting of the DNA helix, facilitating insertion of UvrB beta-hairpin between the DNA strands. Then UvrB probes one DNA strand for the presence of a lesion. If a lesion is found the UvrA subunits dissociate and the UvrB-DNA preincision complex is formed. This complex is subsequently bound by UvrC and the second UvrB is released. If no lesion is found, the DNA wraps around the other UvrB subunit that will check the other stand for damage. In Streptococcus gordonii (strain Challis / ATCC 35105 / BCRC 15272 / CH1 / DL1 / V288), this protein is UvrABC system protein B.